A 287-amino-acid polypeptide reads, in one-letter code: Protein HEXIM2 (287 aa).

2 disordered regions span residues 1–212 and 266–287; these read MKDW…RSKE and RLRQ…QPGS. Position 31 is a phosphoserine (Ser-31). A phosphothreonine mark is found at Thr-34 and Thr-48. Phosphoserine is present on residues Ser-53, Ser-55, Ser-73, Ser-78, and Ser-83. Residues 89-105 are compositionally biased toward basic residues; it reads ARKKHRRRPSKRKRHWR. Over residues 115–134 the composition is skewed to basic and acidic residues; sequence KQQRDERQSQRASRVREEMF. An interaction with P-TEFb region spans residues 142-145; the sequence is PYNT. Basic and acidic residues-rich tracts occupy residues 181–212 and 266–280; these read GQGR…RSKE and RLRQ…EGGR. A coiled-coil region spans residues 208–278; that stretch reads GRSKEELVRD…QENEMWNREG (71 aa). Residues 227–287 are interaction with CCNT1, HEXIM1 and HEXIM2; sequence QAEEEMRRLR…GGRRGGQPGS (61 aa).

It belongs to the HEXIM family. In terms of assembly, homooligomer and heterooligomer with HEXIM1; probably dimeric. Core component of the 7SK RNP complex, at least composed of 7SK RNA, LARP7, MEPCE, HEXIM1 (or HEXIM2) and P-TEFb (composed of CDK9 and CCNT1/cyclin-T1). Interacts with CCNT2.

It is found in the nucleus. Functionally, transcriptional regulator which functions as a general RNA polymerase II transcription inhibitor. Core component of the 7SK RNP complex: in cooperation with 7SK snRNA sequesters P-TEFb in a large inactive 7SK snRNP complex preventing RNA polymerase II phosphorylation and subsequent transcriptional elongation. This is Protein HEXIM2 (HEXIM2) from Bos taurus (Bovine).